Reading from the N-terminus, the 160-residue chain is UPF0262 protein ELI_10965 (160 aa).

The protein belongs to the UPF0262 family.

The sequence is that of UPF0262 protein ELI_10965 from Erythrobacter litoralis (strain HTCC2594).